A 233-amino-acid chain; its full sequence is Cytidylate kinase (233 aa).

Position 15-23 (15-23 (GPSGAGKST)) interacts with ATP. The segment covering 183–201 (RRDEQDSGREHAPLRRADD) has biased composition (basic and acidic residues). Residues 183–202 (RRDEQDSGREHAPLRRADDA) form a disordered region.

It belongs to the cytidylate kinase family. Type 1 subfamily.

It localises to the cytoplasm. The catalysed reaction is CMP + ATP = CDP + ADP. It carries out the reaction dCMP + ATP = dCDP + ADP. The protein is Cytidylate kinase of Geobacter sulfurreducens (strain ATCC 51573 / DSM 12127 / PCA).